Here is an 83-residue protein sequence, read N- to C-terminus: BmKBT-like peptide (83 aa).

Positions M1–T19 are cleaved as a signal peptide. In terms of domain architecture, LCN-type CS-alpha/beta spans K21 to R81. Disulfide bonds link C31–C80, C35–C54, C41–C61, and C45–C63. A propeptide (removed by a carboxypeptidase) is located at residue K83.

It belongs to the long (4 C-C) scorpion toxin superfamily. Sodium channel inhibitor family. Beta subfamily. Expressed by the venom gland.

It localises to the secreted. Functionally, sodium channel inhibitor. Possesses potent toxicity in mice but induces only paralysis in cotton bollworm. This chain is BmKBT-like peptide, found in Olivierus martensii (Manchurian scorpion).